We begin with the raw amino-acid sequence, 285 residues long: Pantothenate synthetase (285 aa).

30–37 (MGFLHEGH) provides a ligand contact to ATP. His-37 functions as the Proton donor in the catalytic mechanism. A (R)-pantoate-binding site is contributed by Gln-61. Gln-61 serves as a coordination point for beta-alanine. 148–151 (GKKD) lines the ATP pocket. Gln-154 serves as a coordination point for (R)-pantoate. ATP contacts are provided by residues Val-177 and 185 to 188 (LSSR).

This sequence belongs to the pantothenate synthetase family. Homodimer.

It is found in the cytoplasm. It catalyses the reaction (R)-pantoate + beta-alanine + ATP = (R)-pantothenate + AMP + diphosphate + H(+). It functions in the pathway cofactor biosynthesis; (R)-pantothenate biosynthesis; (R)-pantothenate from (R)-pantoate and beta-alanine: step 1/1. Functionally, catalyzes the condensation of pantoate with beta-alanine in an ATP-dependent reaction via a pantoyl-adenylate intermediate. This chain is Pantothenate synthetase, found in Leptospira interrogans serogroup Icterohaemorrhagiae serovar copenhageni (strain Fiocruz L1-130).